We begin with the raw amino-acid sequence, 289 residues long: Elongation factor Ts (289 aa).

Residues 82–85 form an involved in Mg(2+) ion dislocation from EF-Tu region; it reads TDFL.

The protein belongs to the EF-Ts family.

It is found in the cytoplasm. Its function is as follows. Associates with the EF-Tu.GDP complex and induces the exchange of GDP to GTP. It remains bound to the aminoacyl-tRNA.EF-Tu.GTP complex up to the GTP hydrolysis stage on the ribosome. The chain is Elongation factor Ts from Pseudomonas paraeruginosa (strain DSM 24068 / PA7) (Pseudomonas aeruginosa (strain PA7)).